A 464-amino-acid chain; its full sequence is E3 ubiquitin-protein ligase RNF38 (464 aa).

Positions 1-94 are disordered; the sequence is MRESEDSPSP…NSISQDENYH (94 aa). Residues 6-20 carry the Bipartite nuclear localization signal 1 motif; sequence DSPSPKRQRLSHSVF. Residues 38–53 are compositionally biased toward polar residues; sequence MTSNRQPPSVRPNQHH. The Bipartite nuclear localization signal 2 signature appears at 64–79; the sequence is RNRRSPPVRRQRGRRE. A compositionally biased stretch (basic residues) spans 64–83; the sequence is RNRRSPPVRRQRGRRERLSR. Residues 412–453 form an RING-type zinc finger; it reads CVVCMCDFESRQLLRVLPCNHEFHAKCVDKWLKGNRTCPICR.

The protein resides in the nucleus. The catalysed reaction is S-ubiquitinyl-[E2 ubiquitin-conjugating enzyme]-L-cysteine + [acceptor protein]-L-lysine = [E2 ubiquitin-conjugating enzyme]-L-cysteine + N(6)-ubiquitinyl-[acceptor protein]-L-lysine.. It functions in the pathway protein modification; protein ubiquitination. Acts as an E3 ubiquitin-protein ligase able to ubiquitinate p53/TP53 which promotes its relocalization to discrete foci associated with PML nuclear bodies. Exhibits preference for UBE2D2 as a E2 enzyme. The protein is E3 ubiquitin-protein ligase RNF38 of Mus musculus (Mouse).